A 266-amino-acid chain; its full sequence is Syntaxin-71 (266 aa).

The Cytoplasmic portion of the chain corresponds to 1 to 243 (MTVIDILTRV…TVNQLRSSRN (243 aa)). At Ser-12 the chain carries Phosphoserine. Residues 44–87 (ETQIETALEKAELVTKEKNRAAAVAMNAEIRRTKARLSEEVPKL) adopt a coiled-coil conformation. Positions 122 to 146 (DGTAGGPKSTSAWTPSSTTSRPDIK) are disordered. The segment covering 130–141 (STSAWTPSSTTS) has biased composition (low complexity). The t-SNARE coiled-coil homology domain occupies 172 to 234 (EMRKIKQEQG…KNTNVRLKDT (63 aa)). A helical; Anchor for type IV membrane protein transmembrane segment spans residues 244–264 (FCIDIVLLCIVLGIAAYLYNV). Residues 265 to 266 (LK) lie on the Vesicular side of the membrane.

It belongs to the syntaxin family. Part of the t-SNARE complex. In terms of tissue distribution, expressed in root, leaf, stem, flower and silique.

Its subcellular location is the membrane. In terms of biological role, vesicle trafficking protein that functions in the secretory pathway. This chain is Syntaxin-71 (SYP71), found in Arabidopsis thaliana (Mouse-ear cress).